We begin with the raw amino-acid sequence, 318 residues long: Aspartate carbamoyltransferase catalytic subunit (318 aa).

The carbamoyl phosphate site is built by Arg56 and Thr57. An L-aspartate-binding site is contributed by Lys84. Carbamoyl phosphate-binding residues include Arg106, His143, and Gln146. Residues Arg176 and Arg230 each coordinate L-aspartate. Carbamoyl phosphate-binding residues include Gly271 and Pro272.

Belongs to the aspartate/ornithine carbamoyltransferase superfamily. ATCase family. As to quaternary structure, heterododecamer (2C3:3R2) of six catalytic PyrB chains organized as two trimers (C3), and six regulatory PyrI chains organized as three dimers (R2).

It catalyses the reaction carbamoyl phosphate + L-aspartate = N-carbamoyl-L-aspartate + phosphate + H(+). It functions in the pathway pyrimidine metabolism; UMP biosynthesis via de novo pathway; (S)-dihydroorotate from bicarbonate: step 2/3. Functionally, catalyzes the condensation of carbamoyl phosphate and aspartate to form carbamoyl aspartate and inorganic phosphate, the committed step in the de novo pyrimidine nucleotide biosynthesis pathway. This Mycobacterium avium (strain 104) protein is Aspartate carbamoyltransferase catalytic subunit.